A 486-amino-acid chain; its full sequence is Glutamyl-tRNA(Gln) amidotransferase subunit A (486 aa).

Residues Lys-79 and Ser-154 each act as charge relay system in the active site. Ser-178 serves as the catalytic Acyl-ester intermediate.

It belongs to the amidase family. GatA subfamily. Heterotrimer of A, B and C subunits.

The catalysed reaction is L-glutamyl-tRNA(Gln) + L-glutamine + ATP + H2O = L-glutaminyl-tRNA(Gln) + L-glutamate + ADP + phosphate + H(+). Functionally, allows the formation of correctly charged Gln-tRNA(Gln) through the transamidation of misacylated Glu-tRNA(Gln) in organisms which lack glutaminyl-tRNA synthetase. The reaction takes place in the presence of glutamine and ATP through an activated gamma-phospho-Glu-tRNA(Gln). This chain is Glutamyl-tRNA(Gln) amidotransferase subunit A, found in Dehalococcoides mccartyi (strain ATCC BAA-2100 / JCM 16839 / KCTC 5957 / BAV1).